The primary structure comprises 250 residues: Flagellar L-ring protein (250 aa).

Positions 1–32 are cleaved as a signal peptide; it reads MTRINTNTQKNNNTKFSKLILGVMVSSIVLSG. C33 carries the N-palmitoyl cysteine lipid modification. C33 is lipidated: S-diacylglycerol cysteine.

Belongs to the FlgH family. As to quaternary structure, the basal body constitutes a major portion of the flagellar organelle and consists of four rings (L,P,S, and M) mounted on a central rod.

It localises to the cell outer membrane. The protein resides in the bacterial flagellum basal body. In terms of biological role, assembles around the rod to form the L-ring and probably protects the motor/basal body from shearing forces during rotation. The sequence is that of Flagellar L-ring protein from Hydrogenovibrio crunogenus (strain DSM 25203 / XCL-2) (Thiomicrospira crunogena).